The sequence spans 138 residues: MAARLCCQLDSSRDVVLLRPFGSESGGPAVSRPSAGSASRADSPLPSAAESHLPLGRLPACFASPSGPCCLGFTCAEFGAMVSTMNFVTWHAKRQLGMPTKDLWTPYVRNQLLTKWEEGTIDSRLPLFVLGGCRHKYM.

The tract at residues 24 to 48 (ESGGPAVSRPSAGSASRADSPLPSA) is disordered. Residues 68–113 (PCCLGFTCAEFGAMVSTMNFVTWHAKRQLGMPTKDLWTPYVRNQLL) are mitochondrial targeting sequence.

The protein belongs to the orthohepadnavirus protein X family. In terms of assembly, may form homodimer. May interact with host CEBPA, CFLAR, CREB1, DDB1, E4F1, HBXIP, HSPD1/HSP60, NFKBIA, POLR2E and SMAD4. Interacts with host SMC5-SMC6 complex and induces its degradation. Interacts with host TRPC4AP; leading to prevent ubiquitination of TRPC4AP. Interacts with host PLSCR1; this interaction promotes ubiquitination and degradation of HBx and impairs HBx-mediated cell proliferation. In terms of processing, a fraction may be phosphorylated in insect cells and HepG2 cells, a human hepatoblastoma cell line. Phosphorylated in vitro by host protein kinase C or mitogen-activated protein kinase. N-acetylated in insect cells.

It localises to the host cytoplasm. It is found in the host nucleus. The protein resides in the host mitochondrion. Its function is as follows. Multifunctional protein that plays a role in silencing host antiviral defenses and promoting viral transcription. Does not seem to be essential for HBV infection. May be directly involved in development of cirrhosis and liver cancer (hepatocellular carcinoma). Most of cytosolic activities involve modulation of cytosolic calcium. The effect on apoptosis is controversial depending on the cell types in which the studies have been conducted. May induce apoptosis by localizing in mitochondria and causing loss of mitochondrial membrane potential. May also modulate apoptosis by binding host CFLAR, a key regulator of the death-inducing signaling complex (DISC). Promotes viral transcription by using the host E3 ubiquitin ligase DDB1 to target the SMC5-SMC6 complex to proteasomal degradation. This host complex would otherwise bind to viral episomal DNA, and prevents its transcription. Moderately stimulates transcription of many different viral and cellular transcription elements. Promoters and enhancers stimulated by HBx contain DNA binding sites for NF-kappa-B, AP-1, AP-2, c-EBP, ATF/CREB, or the calcium-activated factor NF-AT. This is Protein X from Arctic squirrel hepatitis virus (ASHV).